Here is a 110-residue protein sequence, read N- to C-terminus: UPF0060 membrane protein MMAR_2961 (110 aa).

Transmembrane regions (helical) follow at residues 6-26, 32-52, 61-81, and 90-110; these read ILLF…VWQG, GLAW…VATL, ILAA…MAFD, and IVGA…PRAH.

This sequence belongs to the UPF0060 family.

It is found in the cell membrane. The chain is UPF0060 membrane protein MMAR_2961 from Mycobacterium marinum (strain ATCC BAA-535 / M).